Consider the following 442-residue polypeptide: Proline--tRNA ligase (442 aa).

The protein belongs to the class-II aminoacyl-tRNA synthetase family. ProS type 2 subfamily. Homodimer.

It localises to the cytoplasm. The catalysed reaction is tRNA(Pro) + L-proline + ATP = L-prolyl-tRNA(Pro) + AMP + diphosphate. In terms of biological role, catalyzes the attachment of proline to tRNA(Pro) in a two-step reaction: proline is first activated by ATP to form Pro-AMP and then transferred to the acceptor end of tRNA(Pro). In Rhizobium meliloti (strain 1021) (Ensifer meliloti), this protein is Proline--tRNA ligase.